The primary structure comprises 181 residues: MNVIKTEIPDVLIFEPKVFGDERGFFMESFNQKVFEEAVGRKVEFVQDNHSKSTKGVLRGLHYQLEPYAQGKLVRCVVGEVFDVAVDIRKSSPTFGKWVGVNLSAENKRQLWIPEGFAHGFCVLSDEAEFVYKTNNFYSKMQERGILWSDKSINIEWPVQNPLLSDKDINGQKFVDADYFI.

Substrate is bound by residues Arg-23, Glu-28, 47–49, and Arg-59; that span reads QDN. The active-site Proton acceptor is the His-62. Positions 72 and 119 each coordinate substrate. Residue Tyr-132 is the Proton donor of the active site. Positions 143 and 167 each coordinate substrate.

The protein belongs to the dTDP-4-dehydrorhamnose 3,5-epimerase family. Homodimer.

It catalyses the reaction dTDP-4-dehydro-6-deoxy-alpha-D-glucose = dTDP-4-dehydro-beta-L-rhamnose. Its pathway is carbohydrate biosynthesis; dTDP-L-rhamnose biosynthesis. The protein operates within bacterial outer membrane biogenesis; LPS O-antigen biosynthesis. Catalyzes the epimerization of the C3' and C5'positions of dTDP-6-deoxy-D-xylo-4-hexulose, forming dTDP-6-deoxy-L-lyxo-4-hexulose. The polypeptide is dTDP-4-dehydrorhamnose 3,5-epimerase (rfbC) (Shigella flexneri).